The sequence spans 101 residues: DNA-binding protein Fis (101 aa).

The segment at residues 77 to 96 is a DNA-binding region (H-T-H motif); sequence QTRAANMLGINRGTLRKKLK.

Belongs to the transcriptional regulatory Fis family. Homodimer.

Functionally, activates ribosomal RNA transcription. Plays a direct role in upstream activation of rRNA promoters. This is DNA-binding protein Fis from Shewanella frigidimarina (strain NCIMB 400).